The primary structure comprises 533 residues: Yeast-form wall Protein 1 (533 aa).

An N-terminal signal peptide occupies residues 1–21 (MKVSTIFAAASALFAATTTLA). Residue N115 is glycosylated (N-linked (GlcNAc...) asparagine). Disordered regions lie at residues 161 to 219 (YVPG…GEST) and 418 to 451 (PTKG…AHAS). Composition is skewed to low complexity over residues 163–214 (PGSS…ATGA) and 427–451 (PGSP…AHAS). G511 carries GPI-anchor amidated glycine lipidation. Positions 512–533 (AAAASAGASVLALALIPLAYFI) are cleaved as a propeptide — removed in mature form.

Belongs to the flocculin family. Post-translationally, the GPI-anchor is attached to the protein in the endoplasmic reticulum and serves to target the protein to the cell surface. There, the glucosamine-inositol phospholipid moiety is cleaved off and the GPI-modified mannoprotein is covalently attached via its lipidless GPI glycan remnant to the 1,6-beta-glucan of the outer cell wall layer. In terms of processing, cleaved by SAP9 and SAP10, which leads to its release from the cell wall. N-glycosylated.

The protein localises to the secreted. Its subcellular location is the cell wall. The protein resides in the membrane. Its function is as follows. Cell wall protein which plays an anti-adhesive role and promotes dispersal of yeast forms, which allows the organism to seek new sites for colonization. This is Yeast-form wall Protein 1 (YWP1) from Candida albicans (strain SC5314 / ATCC MYA-2876) (Yeast).